The primary structure comprises 224 residues: Ribonuclease HII (224 aa).

The region spanning 1–210 (MKIGGIDEAG…VRKIEESIKA (210 aa)) is the RNase H type-2 domain. Residues aspartate 7, glutamate 8, and aspartate 105 each contribute to the a divalent metal cation site.

It belongs to the RNase HII family. The cofactor is Mn(2+). It depends on Mg(2+) as a cofactor.

It localises to the cytoplasm. It carries out the reaction Endonucleolytic cleavage to 5'-phosphomonoester.. Endonuclease that specifically degrades the RNA of RNA-DNA hybrids. This Pyrococcus furiosus (strain ATCC 43587 / DSM 3638 / JCM 8422 / Vc1) protein is Ribonuclease HII.